A 366-amino-acid polypeptide reads, in one-letter code: Flagellar P-ring protein (366 aa).

The first 20 residues, 1–20 (MVIKFLSALILLLVTTAAQA), serve as a signal peptide directing secretion.

Belongs to the FlgI family. As to quaternary structure, the basal body constitutes a major portion of the flagellar organelle and consists of four rings (L,P,S, and M) mounted on a central rod.

It localises to the periplasm. The protein localises to the bacterial flagellum basal body. Its function is as follows. Assembles around the rod to form the L-ring and probably protects the motor/basal body from shearing forces during rotation. The protein is Flagellar P-ring protein of Escherichia coli (strain UTI89 / UPEC).